The chain runs to 243 residues: Leucyl/phenylalanyl-tRNA--protein transferase (243 aa).

Belongs to the L/F-transferase family.

It is found in the cytoplasm. It carries out the reaction N-terminal L-lysyl-[protein] + L-leucyl-tRNA(Leu) = N-terminal L-leucyl-L-lysyl-[protein] + tRNA(Leu) + H(+). It catalyses the reaction N-terminal L-arginyl-[protein] + L-leucyl-tRNA(Leu) = N-terminal L-leucyl-L-arginyl-[protein] + tRNA(Leu) + H(+). The catalysed reaction is L-phenylalanyl-tRNA(Phe) + an N-terminal L-alpha-aminoacyl-[protein] = an N-terminal L-phenylalanyl-L-alpha-aminoacyl-[protein] + tRNA(Phe). In terms of biological role, functions in the N-end rule pathway of protein degradation where it conjugates Leu, Phe and, less efficiently, Met from aminoacyl-tRNAs to the N-termini of proteins containing an N-terminal arginine or lysine. The sequence is that of Leucyl/phenylalanyl-tRNA--protein transferase from Xylella fastidiosa (strain 9a5c).